Here is a 284-residue protein sequence, read N- to C-terminus: Tropomyosin alpha-3 chain (284 aa).

M1 carries the post-translational modification N-acetylmethionine. Positions 1-43 are disordered; sequence MEAIKKKMQMLKLDKENALDRAEQAEAEQKQAEERSKQLEDEL. Residues 1–284 adopt a coiled-coil conformation; it reads MEAIKKKMQM…DHALNDMTSI (284 aa). Position 2 is an N-acetylalanine (E2). Positions 12–40 are enriched in basic and acidic residues; it reads KLDKENALDRAEQAEAEQKQAEERSKQLE. T53 is subject to Phosphothreonine. 2 positions are modified to phosphoserine: S61 and S87. T108 is modified (phosphothreonine). Residues S206 and S215 each carry the phosphoserine modification. Residue L228 is modified to N6-acetyllysine. The residue at position 252 (T252) is a Phosphothreonine. The residue at position 261 (Y261) is a Phosphotyrosine. A Phosphoserine modification is found at S271. T282 carries the phosphothreonine modification. Phosphoserine is present on S283.

It belongs to the tropomyosin family. As to quaternary structure, homodimer. Heterodimer of an alpha (TPM1, TPM3 or TPM4) and a beta (TPM2) chain. Interacts with TMOD1. Interacts with TNNT1.

The protein resides in the cytoplasm. It is found in the cytoskeleton. Functionally, binds to actin filaments in muscle and non-muscle cells. Plays a central role, in association with the troponin complex, in the calcium dependent regulation of vertebrate striated muscle contraction. Smooth muscle contraction is regulated by interaction with caldesmon. In non-muscle cells is implicated in stabilizing cytoskeleton actin filaments. The protein is Tropomyosin alpha-3 chain (TPM3) of Bos taurus (Bovine).